A 368-amino-acid polypeptide reads, in one-letter code: Agmatine deiminase (368 aa).

The Amidino-cysteine intermediate role is filled by C357.

This sequence belongs to the agmatine deiminase family. In terms of assembly, homodimer.

It carries out the reaction agmatine + H2O = N-carbamoylputrescine + NH4(+). It participates in amine and polyamine biosynthesis; putrescine biosynthesis via agmatine pathway; N-carbamoylputrescine from agmatine: step 1/1. Mediates the hydrolysis of agmatine into N-carbamoylputrescine in the arginine decarboxylase (ADC) pathway of putrescine biosynthesis, a basic polyamine. The polypeptide is Agmatine deiminase (Pseudomonas aeruginosa (strain LESB58)).